Reading from the N-terminus, the 615-residue chain is Probable ATP-citrate synthase subunit 1 (615 aa).

ATP-binding positions include 221–241 and 272–298; these read LIRF…EVGG and FKTE…KNQA. Glutamate 238 provides a ligand contact to Mg(2+). Residue histidine 280 is the Tele-phosphohistidine intermediate of the active site. 299 to 309 is a binding site for CoA; the sequence is MREAGIYVPET. Serine 359 carries the phosphoserine modification.

This sequence belongs to the succinate/malate CoA ligase alpha subunit family. As to quaternary structure, composed of two subunits.

It is found in the cytoplasm. It catalyses the reaction oxaloacetate + acetyl-CoA + ADP + phosphate = citrate + ATP + CoA. In terms of biological role, catalyzes the formation of cytosolic acetyl-CoA, which is mainly used for the biosynthesis of fatty acids and sterols. This chain is Probable ATP-citrate synthase subunit 1, found in Schizosaccharomyces pombe (strain 972 / ATCC 24843) (Fission yeast).